A 479-amino-acid polypeptide reads, in one-letter code: UDP-N-acetylmuramate--L-alanine ligase (479 aa).

115–121 (GTHGKTT) is an ATP binding site.

This sequence belongs to the MurCDEF family.

It is found in the cytoplasm. It catalyses the reaction UDP-N-acetyl-alpha-D-muramate + L-alanine + ATP = UDP-N-acetyl-alpha-D-muramoyl-L-alanine + ADP + phosphate + H(+). The protein operates within cell wall biogenesis; peptidoglycan biosynthesis. Cell wall formation. In Acidiphilium cryptum (strain JF-5), this protein is UDP-N-acetylmuramate--L-alanine ligase.